The sequence spans 272 residues: Ethanolamine ammonia-lyase small subunit (272 aa).

Residues V161, E182, and C211 each contribute to the adenosylcob(III)alamin site.

This sequence belongs to the EutC family. As to quaternary structure, the basic unit is a heterodimer which dimerizes to form tetramers. The heterotetramers trimerize; 6 large subunits form a core ring with 6 small subunits projecting outwards. It depends on adenosylcob(III)alamin as a cofactor.

It localises to the bacterial microcompartment. The catalysed reaction is ethanolamine = acetaldehyde + NH4(+). It functions in the pathway amine and polyamine degradation; ethanolamine degradation. In terms of biological role, catalyzes the deamination of various vicinal amino-alcohols to oxo compounds. Allows this organism to utilize ethanolamine as the sole source of nitrogen and carbon in the presence of external vitamin B12. The polypeptide is Ethanolamine ammonia-lyase small subunit (Pseudomonas putida (strain W619)).